The sequence spans 252 residues: Ribosomal RNA small subunit methyltransferase J (252 aa).

S-adenosyl-L-methionine contacts are provided by residues arginine 101–aspartate 102, glutamate 117–arginine 118, serine 153–serine 154, and aspartate 171.

Belongs to the methyltransferase superfamily. RsmJ family.

It localises to the cytoplasm. The catalysed reaction is guanosine(1516) in 16S rRNA + S-adenosyl-L-methionine = N(2)-methylguanosine(1516) in 16S rRNA + S-adenosyl-L-homocysteine + H(+). Its function is as follows. Specifically methylates the guanosine in position 1516 of 16S rRNA. This chain is Ribosomal RNA small subunit methyltransferase J, found in Salmonella paratyphi B (strain ATCC BAA-1250 / SPB7).